The sequence spans 366 residues: Histidinol-phosphate aminotransferase (366 aa).

Residue lysine 228 is modified to N6-(pyridoxal phosphate)lysine.

Belongs to the class-II pyridoxal-phosphate-dependent aminotransferase family. Histidinol-phosphate aminotransferase subfamily. In terms of assembly, homodimer. It depends on pyridoxal 5'-phosphate as a cofactor.

The catalysed reaction is L-histidinol phosphate + 2-oxoglutarate = 3-(imidazol-4-yl)-2-oxopropyl phosphate + L-glutamate. It participates in amino-acid biosynthesis; L-histidine biosynthesis; L-histidine from 5-phospho-alpha-D-ribose 1-diphosphate: step 7/9. The polypeptide is Histidinol-phosphate aminotransferase (Corynebacterium glutamicum (strain ATCC 13032 / DSM 20300 / JCM 1318 / BCRC 11384 / CCUG 27702 / LMG 3730 / NBRC 12168 / NCIMB 10025 / NRRL B-2784 / 534)).